Here is a 421-residue protein sequence, read N- to C-terminus: uncharacterized protein (421 aa).

A TRAM domain is found at 14-72 (DLTKGDTITVEVTRPAHGGEGIAHHGGRVIFVRGGFPGDDVDVEITQVKKRFARGFVVQ). Positions 250, 286, 308, and 349 each coordinate S-adenosyl-L-methionine. Cys-376 acts as the Nucleophile in catalysis.

This sequence belongs to the class I-like SAM-binding methyltransferase superfamily. RNA M5U methyltransferase family.

This is an uncharacterized protein from Corynebacterium efficiens (strain DSM 44549 / YS-314 / AJ 12310 / JCM 11189 / NBRC 100395).